We begin with the raw amino-acid sequence, 832 residues long: Tuftelin-interacting protein 11 (832 aa).

2 disordered regions span residues 1-21 (MSMS…GVEI) and 33-145 (NEFN…GNWE). Composition is skewed to basic and acidic residues over residues 36 to 49 (NPDR…KEEA) and 88 to 99 (TAAEEKAEREGS). Residues 121 to 130 (TGGSFKTSQR) show a composition bias toward polar residues. The region spanning 148–194 (TRGIGQKLLQKMGYVPGKGLGKNAQGIVNPIEAKLRKGKGAVGAYGS) is the G-patch domain. Residue Ser-209 is modified to Phosphoserine.

The protein belongs to the TFP11/STIP family. In terms of assembly, identified in the spliceosome C complex.

The protein resides in the nucleus. Involved in pre-mRNA splicing, specifically in spliceosome disassembly during late-stage splicing events. This Danio rerio (Zebrafish) protein is Tuftelin-interacting protein 11 (tfip11).